Reading from the N-terminus, the 604-residue chain is Membrane protein insertase YidC (604 aa).

The helical transmembrane segment at 8-28 (LYLAIGLSLLVLIGWNYFFAG) threads the bilayer. The segment at 42 to 84 (EQQAQTQTTSDTTARSDLNVPGQRSLPGESPQTQLSRPEALAA) is disordered. Over residues 43-58 (QQAQTQTTSDTTARSD) the composition is skewed to low complexity. Helical transmembrane passes span 349 to 369 (FDLLIDWGYFYFITRPMFWIL), 375 to 395 (VVGNFGVAILCITVLVKAVFF), 449 to 469 (LPMLIQIPVFFALYKVLFVTI), 507 to 527 (MIGHFLAIGIWPLIMGVSMFF), and 546 to 566 (WMPVIFTFMLGTFPSGLVIYW).

This sequence belongs to the OXA1/ALB3/YidC family. Type 1 subfamily. Interacts with the Sec translocase complex via SecD. Specifically interacts with transmembrane segments of nascent integral membrane proteins during membrane integration.

The protein localises to the cell inner membrane. In terms of biological role, required for the insertion and/or proper folding and/or complex formation of integral membrane proteins into the membrane. Involved in integration of membrane proteins that insert both dependently and independently of the Sec translocase complex, as well as at least some lipoproteins. Aids folding of multispanning membrane proteins. This Beijerinckia indica subsp. indica (strain ATCC 9039 / DSM 1715 / NCIMB 8712) protein is Membrane protein insertase YidC.